The sequence spans 301 residues: HTH-type transcriptional activator NagR (301 aa).

One can recognise an HTH lysR-type domain in the interval 6-63; it reads IDLNLLVVFNQLLLDRSVSTAGEKLGLTQPAVSNSLKRLRAALKDDLFLRTSKGMEPT. Positions 23–42 form a DNA-binding region, H-T-H motif; it reads VSTAGEKLGLTQPAVSNSLK.

Belongs to the LysR transcriptional regulatory family.

In terms of biological role, may regulate the expression of the naphthalene (nagA-F) and salicylate (nagG-M) metabolism genes. The chain is HTH-type transcriptional activator NagR from Ralstonia sp.